We begin with the raw amino-acid sequence, 465 residues long: Ribulose bisphosphate carboxylase large chain (465 aa).

Position 4 is an N6,N6,N6-trimethyllysine (lysine 4). Asparagine 113 and threonine 163 together coordinate substrate. The active-site Proton acceptor is lysine 165. Residue lysine 167 participates in substrate binding. Positions 191, 193, and 194 each coordinate Mg(2+). N6-carboxylysine is present on lysine 191. Residue histidine 284 is the Proton acceptor of the active site. The substrate site is built by arginine 285, histidine 317, and serine 369.

This sequence belongs to the RuBisCO large chain family. Type I subfamily. In terms of assembly, heterohexadecamer of 8 large chains and 8 small chains; disulfide-linked. The disulfide link is formed within the large subunit homodimers. Requires Mg(2+) as cofactor. The disulfide bond which can form in the large chain dimeric partners within the hexadecamer appears to be associated with oxidative stress and protein turnover.

The protein resides in the plastid. It localises to the chloroplast. It catalyses the reaction 2 (2R)-3-phosphoglycerate + 2 H(+) = D-ribulose 1,5-bisphosphate + CO2 + H2O. The enzyme catalyses D-ribulose 1,5-bisphosphate + O2 = 2-phosphoglycolate + (2R)-3-phosphoglycerate + 2 H(+). RuBisCO catalyzes two reactions: the carboxylation of D-ribulose 1,5-bisphosphate, the primary event in carbon dioxide fixation, as well as the oxidative fragmentation of the pentose substrate in the photorespiration process. Both reactions occur simultaneously and in competition at the same active site. The polypeptide is Ribulose bisphosphate carboxylase large chain (Idesia polycarpa (Iigiri tree)).